We begin with the raw amino-acid sequence, 255 residues long: tRNA pseudouridine synthase A (255 aa).

Asp-56 (nucleophile) is an active-site residue. Tyr-114 lines the substrate pocket.

The protein belongs to the tRNA pseudouridine synthase TruA family. As to quaternary structure, homodimer.

It catalyses the reaction uridine(38/39/40) in tRNA = pseudouridine(38/39/40) in tRNA. In terms of biological role, formation of pseudouridine at positions 38, 39 and 40 in the anticodon stem and loop of transfer RNAs. This chain is tRNA pseudouridine synthase A, found in Methylacidiphilum infernorum (isolate V4) (Methylokorus infernorum (strain V4)).